We begin with the raw amino-acid sequence, 121 residues long: Large ribosomal subunit protein bL20 (121 aa).

This sequence belongs to the bacterial ribosomal protein bL20 family.

Functionally, binds directly to 23S ribosomal RNA and is necessary for the in vitro assembly process of the 50S ribosomal subunit. It is not involved in the protein synthesizing functions of that subunit. This Ruegeria pomeroyi (strain ATCC 700808 / DSM 15171 / DSS-3) (Silicibacter pomeroyi) protein is Large ribosomal subunit protein bL20.